The following is a 268-amino-acid chain: Nickel import ATP-binding protein NikE (268 aa).

The 249-residue stretch at 4-252 (LNVSGLSHHY…SSDAGRVLQN (249 aa)) folds into the ABC transporter domain. 45–52 (GRSGCGKS) contributes to the ATP binding site.

It belongs to the ABC transporter superfamily. Nickel importer (TC 3.A.1.5.3) family. As to quaternary structure, the complex is composed of two ATP-binding proteins (NikD and NikE), two transmembrane proteins (NikB and NikC) and a solute-binding protein (NikA).

The protein localises to the cell inner membrane. The catalysed reaction is Ni(2+)(out) + ATP + H2O = Ni(2+)(in) + ADP + phosphate + H(+). In terms of biological role, part of the ABC transporter complex NikABCDE involved in nickel import. Responsible for energy coupling to the transport system. This Shigella boydii serotype 4 (strain Sb227) protein is Nickel import ATP-binding protein NikE.